The primary structure comprises 378 residues: Zinc transporter 7 (378 aa).

Residues 1 to 37 (MLPLSIKDDEYKPPKFNLFGKISGWFRSILSDKTSRN) lie on the Cytoplasmic side of the membrane. Residues 38-58 (LFFFLCLNLSFAFVELLYGIW) form a helical membrane-spanning segment. At 59–67 (SNCLGLISD) the chain is on the lumenal side. A helical transmembrane segment spans residues 68 to 88 (SFHMFFDSTAILAGLAASVIS). Residues 89–102 (KWRDNDAFSYGYVR) lie on the Cytoplasmic side of the membrane. The chain crosses the membrane as a helical span at residues 103-123 (AEVLAGFVNGLFLIFTAFFIF). The Lumenal segment spans residues 124 to 140 (SEGVERALAPPDVHHER). A helical transmembrane segment spans residues 141 to 161 (LLLVSILGFVVNLVGIFVFNH). The interval 161–220 (HGGHGHSHGSGHGHSHSLFNGALDHSHGHEDHCHSHEAKHGAAHSHDHDHAHGHGHLHSH) is his-rich loop. Residues 162-238 (GGHGHSHGSG…AGPSRQILQG (77 aa)) lie on the Cytoplasmic side of the membrane. Over residues 186 to 223 (SHGHEDHCHSHEAKHGAAHSHDHDHAHGHGHLHSHDGP) the composition is skewed to basic and acidic residues. The interval 186-224 (SHGHEDHCHSHEAKHGAAHSHDHDHAHGHGHLHSHDGPS) is disordered. The helical transmembrane segment at 239–259 (VFLHILADTLGSIGVIASAIM) threads the bilayer. The Lumenal portion of the chain corresponds to 260-264 (MQNFG). The helical transmembrane segment at 265–285 (LMIADPICSILIAILIVVSVI) threads the bilayer. Topologically, residues 286-378 (PLLRESVGIL…LYVQIDFAAM (93 aa)) are cytoplasmic.

It belongs to the cation diffusion facilitator (CDF) transporter (TC 2.A.4) family. SLC30A subfamily. In terms of assembly, homooligomer. In terms of tissue distribution, highly expressed in liver, spleen, duodenum and part of the jejunum of small intestine (at protein level). Moderately expressed in kidney, lung, and brain. Barely detectable in heart. In brain, expressed in cerebellum, cerebral cortex and hippocampus (at protein level).

The protein resides in the golgi apparatus membrane. It localises to the cytoplasmic vesicle. The protein localises to the golgi apparatus. Its subcellular location is the trans-Golgi network. It is found in the sarcoplasmic reticulum. The protein resides in the mitochondrion. The enzyme catalyses Zn(2+)(in) = Zn(2+)(out). Its function is as follows. Zinc ion transporter mediating zinc entry from the cytosol into the lumen of organelles along the secretory pathway. By contributing to zinc ion homeostasis within the early secretory pathway, regulates the activation and folding of enzymes like alkaline phosphatases. In Mus musculus (Mouse), this protein is Zinc transporter 7.